The primary structure comprises 346 residues: Isopentenyl-diphosphate delta-isomerase (346 aa).

Position 12-13 (12-13 (RK)) interacts with substrate. Residues 67–69 (ALT), Ser-97, and Asn-126 contribute to the FMN site. 97–99 (SQR) is a substrate binding site. Gln-156 provides a ligand contact to substrate. Glu-157 serves as a coordination point for Mg(2+). Residues Lys-188, Thr-218, 263-265 (GIR), and 284-285 (AG) contribute to the FMN site.

It belongs to the IPP isomerase type 2 family. Homooctamer. Dimer of tetramers. It depends on FMN as a cofactor. NADPH serves as cofactor. The cofactor is Mg(2+).

It is found in the cytoplasm. The catalysed reaction is isopentenyl diphosphate = dimethylallyl diphosphate. Involved in the biosynthesis of isoprenoids. Catalyzes the 1,3-allylic rearrangement of the homoallylic substrate isopentenyl (IPP) to its allylic isomer, dimethylallyl diphosphate (DMAPP). This Moorella thermoacetica (strain ATCC 39073 / JCM 9320) protein is Isopentenyl-diphosphate delta-isomerase.